The sequence spans 249 residues: LexA repressor (249 aa).

Residues 1–25 are disordered; sequence MAAAATGGRATSQPKKTTKGLTPRQ. Residues 45–65 constitute a DNA-binding region (H-T-H motif); it reads MREIGDTVGLASLSSVTHQLS. Catalysis depends on for autocatalytic cleavage activity residues Ser173 and Lys210.

Belongs to the peptidase S24 family. In terms of assembly, homodimer.

It carries out the reaction Hydrolysis of Ala-|-Gly bond in repressor LexA.. In terms of biological role, represses a number of genes involved in the response to DNA damage (SOS response), including recA and lexA. In the presence of single-stranded DNA, RecA interacts with LexA causing an autocatalytic cleavage which disrupts the DNA-binding part of LexA, leading to derepression of the SOS regulon and eventually DNA repair. This is LexA repressor from Pseudarthrobacter chlorophenolicus (strain ATCC 700700 / DSM 12829 / CIP 107037 / JCM 12360 / KCTC 9906 / NCIMB 13794 / A6) (Arthrobacter chlorophenolicus).